Here is a 95-residue protein sequence, read N- to C-terminus: Protein Vpr (95 aa).

A homooligomerization region spans residues 1–42 (MEQAPEDQGPQREPYNEWALELLEDLKNEALRHFPRPWLHGL). Phosphoserine; by host occurs at positions 79, 93, and 95.

It belongs to the HIV-1 VPR protein family. As to quaternary structure, homooligomer, may form homodimer. Interacts with p6-gag region of the Pr55 Gag precursor protein through a (Leu-X-X)4 motif near the C-terminus of the P6gag protein. Interacts with host UNG. May interact with host RAD23A/HHR23A. Interacts with host VPRBP/DCAF1, leading to hijack the CUL4A-RBX1-DDB1-DCAF1/VPRBP complex, mediating ubiquitination of host proteins such as TERT and ZGPAT and arrest of the cell cycle in G2 phase. In terms of processing, phosphorylated on several residues by host. These phosphorylations regulate VPR activity for the nuclear import of the HIV-1 pre-integration complex.

The protein resides in the virion. Its subcellular location is the host nucleus. The protein localises to the host extracellular space. Its function is as follows. During virus replication, may deplete host UNG protein, and incude G2-M cell cycle arrest. Acts by targeting specific host proteins for degradation by the 26S proteasome, through association with the cellular CUL4A-DDB1 E3 ligase complex by direct interaction with host VPRPB/DCAF-1. Cell cycle arrest reportedly occurs within hours of infection and is not blocked by antiviral agents, suggesting that it is initiated by the VPR carried into the virion. Additionally, VPR induces apoptosis in a cell cycle dependent manner suggesting that these two effects are mechanistically linked. Detected in the serum and cerebrospinal fluid of AIDS patient, VPR may also induce cell death to bystander cells. In terms of biological role, during virus entry, plays a role in the transport of the viral pre-integration (PIC) complex to the host nucleus. This function is crucial for viral infection of non-dividing macrophages. May act directly at the nuclear pore complex, by binding nucleoporins phenylalanine-glycine (FG)-repeat regions. This is Protein Vpr from Pan troglodytes (Chimpanzee).